The primary structure comprises 763 residues: Dual specificity tyrosine-phosphorylation-regulated kinase 1A (763 aa).

Phosphoserine is present on serine 14. A disordered region spans residues 32–57 (GQMPHSHQYSDRRQPNISDQQVSALS). Polar residues predominate over residues 46-57 (PNISDQQVSALS). Tyrosine 111 is modified (phosphotyrosine; by autocatalysis). The interval 115 to 136 (KKRRHQQGQGDDSSHKKERKVY) is disordered. Positions 117 to 134 (RRHQQGQGDDSSHKKERK) match the Bipartite nuclear localization signal motif. At tyrosine 140 the chain carries Phosphotyrosine; by autocatalysis. Residue tyrosine 145 is modified to Phosphotyrosine. Residue tyrosine 159 is modified to Phosphotyrosine; by autocatalysis. Residues 159–479 (YEIDSLIGKG…PYYALQHSFF (321 aa)) enclose the Protein kinase domain. 165–173 (IGKGSFGQV) contributes to the ATP binding site. Tyrosine 177 is modified (phosphotyrosine; by autocatalysis). Residue lysine 188 coordinates ATP. Tyrosine 219 is modified (phosphotyrosine; by autocatalysis). An ATP-binding site is contributed by 238-241 (FEML). Catalysis depends on aspartate 287, which acts as the Proton acceptor. Phosphoserine; by autocatalysis is present on serine 310. Tyrosine 319 and tyrosine 321 each carry phosphotyrosine; by autocatalysis. Position 402 is a phosphothreonine; by autocatalysis (threonine 402). Residues 408–442 (TKDGKREYKPPGTRKLHNILGVETGGPGGRRAGES) are disordered. Phosphotyrosine; by autocatalysis is present on tyrosine 449. Positions 485–501 (EGTNTSNSVSTSPAMEQ) are enriched in polar residues. Disordered regions lie at residues 485–540 (EGTN…HSGG), 596–679 (NALH…GNQA), and 744–763 (DREE…VASS). Low complexity predominate over residues 502–525 (SQSSGTTSSTSSSSGGSSGTSNSG). Phosphoserine occurs at positions 529 and 538. The segment at 595–625 (QNALHHHHGNSSHHHHHHHHHHHHHGQQALG) is histidine-rich domain (HRD). Residues 598 to 620 (LHHHHGNSSHHHHHHHHHHHHHG) are compositionally biased toward basic residues. Residues 634–645 (NSPTNSSSTQDS) show a composition bias toward polar residues. Residues 654-672 (SMTSLSSSTTSSSTSSSST) are compositionally biased toward low complexity. Phosphoserine is present on residues serine 748 and serine 758. Positions 754–763 (CVQQSPVASS) are enriched in polar residues.

Belongs to the protein kinase superfamily. CMGC Ser/Thr protein kinase family. MNB/DYRK subfamily. Interacts with RAD54L2/ARIP4. Interacts with CRY2. Interacts with RANBP9. Interacts with WDR68. Interacts with SIRT1. As to quaternary structure, (Microbial infection) Interacts with human adenovirus 5 E1A protein. In terms of processing, autophosphorylated on numerous tyrosine residues. Can also autophosphorylate on serine and threonine residues (in vitro). Ubiquitous. Highest levels in skeletal muscle, testis, fetal lung and fetal kidney.

Its subcellular location is the nucleus. It is found in the nucleus speckle. It carries out the reaction L-seryl-[protein] + ATP = O-phospho-L-seryl-[protein] + ADP + H(+). The enzyme catalyses L-threonyl-[protein] + ATP = O-phospho-L-threonyl-[protein] + ADP + H(+). The catalysed reaction is L-tyrosyl-[protein] + ATP = O-phospho-L-tyrosyl-[protein] + ADP + H(+). It catalyses the reaction [DNA-directed RNA polymerase] + ATP = phospho-[DNA-directed RNA polymerase] + ADP + H(+). With respect to regulation, inhibited by RANBP9. Inhibited by harmine, leucettamine B and leucettine L41. Its function is as follows. Dual-specificity kinase which possesses both serine/threonine and tyrosine kinase activities. Exhibits a substrate preference for proline at position P+1 and arginine at position P-3. Plays an important role in double-strand breaks (DSBs) repair following DNA damage. Mechanistically, phosphorylates RNF169 and increases its ability to block accumulation of TP53BP1 at the DSB sites thereby promoting homologous recombination repair (HRR). Also acts as a positive regulator of transcription by acting as a CTD kinase that mediates phosphorylation of the CTD (C-terminal domain) of the large subunit of RNA polymerase II (RNAP II) POLR2A. May play a role in a signaling pathway regulating nuclear functions of cell proliferation. Modulates alternative splicing by phosphorylating the splice factor SRSF6. Has pro-survival function and negatively regulates the apoptotic process. Promotes cell survival upon genotoxic stress through phosphorylation of SIRT1. This in turn inhibits p53/TP53 activity and apoptosis. Phosphorylates SEPTIN4, SEPTIN5 and SF3B1 at 'Thr-434'. The sequence is that of Dual specificity tyrosine-phosphorylation-regulated kinase 1A from Homo sapiens (Human).